Reading from the N-terminus, the 1077-residue chain is Carbamoyl phosphate synthase large chain (1077 aa).

A carboxyphosphate synthetic domain region spans residues 1–403 (MPKRTDIQSI…SLHKALRGLE (403 aa)). ATP-binding residues include Arg129, Arg169, Gly175, Gly176, Glu208, Leu210, Glu215, Gly241, Ile242, His243, Gln285, and Glu299. The 196-residue stretch at 133-328 (DKAMKSIGLE…IAKIAAKLAV (196 aa)) folds into the ATP-grasp 1 domain. Gln285, Glu299, and Asn301 together coordinate Mg(2+). Residues Gln285, Glu299, and Asn301 each coordinate Mn(2+). Residues 404–553 (VGATGFDEMV…YSSYDEECEA (150 aa)) form an oligomerization domain region. Residues 554–935 (NPTDKDKIMV…AYAKAELGCG (382 aa)) are carbamoyl phosphate synthetic domain. Residues 678-869 (QAAVERLGLL…LAKIAARVMA (192 aa)) enclose the ATP-grasp 2 domain. ATP contacts are provided by Arg714, Arg753, Leu755, Glu760, Gly785, Val786, His787, Ser788, Gln828, and Glu840. 3 residues coordinate Mg(2+): Gln828, Glu840, and Asn842. 3 residues coordinate Mn(2+): Gln828, Glu840, and Asn842. One can recognise an MGS-like domain in the interval 936 to 1077 (SVYPEGGRAL…HAKVKASLEA (142 aa)). The tract at residues 936 to 1077 (SVYPEGGRAL…HAKVKASLEA (142 aa)) is allosteric domain.

Belongs to the CarB family. Composed of two chains; the small (or glutamine) chain promotes the hydrolysis of glutamine to ammonia, which is used by the large (or ammonia) chain to synthesize carbamoyl phosphate. Tetramer of heterodimers (alpha,beta)4. Requires Mg(2+) as cofactor. Mn(2+) is required as a cofactor.

It carries out the reaction hydrogencarbonate + L-glutamine + 2 ATP + H2O = carbamoyl phosphate + L-glutamate + 2 ADP + phosphate + 2 H(+). The catalysed reaction is hydrogencarbonate + NH4(+) + 2 ATP = carbamoyl phosphate + 2 ADP + phosphate + 2 H(+). It participates in amino-acid biosynthesis; L-arginine biosynthesis; carbamoyl phosphate from bicarbonate: step 1/1. Its pathway is pyrimidine metabolism; UMP biosynthesis via de novo pathway; (S)-dihydroorotate from bicarbonate: step 1/3. In terms of biological role, large subunit of the glutamine-dependent carbamoyl phosphate synthetase (CPSase). CPSase catalyzes the formation of carbamoyl phosphate from the ammonia moiety of glutamine, carbonate, and phosphate donated by ATP, constituting the first step of 2 biosynthetic pathways, one leading to arginine and/or urea and the other to pyrimidine nucleotides. The large subunit (synthetase) binds the substrates ammonia (free or transferred from glutamine from the small subunit), hydrogencarbonate and ATP and carries out an ATP-coupled ligase reaction, activating hydrogencarbonate by forming carboxy phosphate which reacts with ammonia to form carbamoyl phosphate. In Vibrio parahaemolyticus serotype O3:K6 (strain RIMD 2210633), this protein is Carbamoyl phosphate synthase large chain.